Consider the following 93-residue polypeptide: UPF0223 protein YfdD (93 aa).

The protein belongs to the UPF0223 family.

The protein is UPF0223 protein YfdD (yfdD) of Lactococcus lactis subsp. lactis (strain IL1403) (Streptococcus lactis).